The following is a 125-amino-acid chain: uncharacterized protein (125 aa).

Positions 1–21 are disordered; the sequence is MLFYHCSSFSSSSSSSSSSAS. The span at 7 to 21 shows a compositional bias: low complexity; that stretch reads SSFSSSSSSSSSSAS.

This is an uncharacterized protein from Saccharomyces cerevisiae (strain ATCC 204508 / S288c) (Baker's yeast).